We begin with the raw amino-acid sequence, 341 residues long: S-adenosylmethionine:tRNA ribosyltransferase-isomerase (341 aa).

This sequence belongs to the QueA family. In terms of assembly, monomer.

The protein resides in the cytoplasm. It catalyses the reaction 7-aminomethyl-7-carbaguanosine(34) in tRNA + S-adenosyl-L-methionine = epoxyqueuosine(34) in tRNA + adenine + L-methionine + 2 H(+). It participates in tRNA modification; tRNA-queuosine biosynthesis. In terms of biological role, transfers and isomerizes the ribose moiety from AdoMet to the 7-aminomethyl group of 7-deazaguanine (preQ1-tRNA) to give epoxyqueuosine (oQ-tRNA). The chain is S-adenosylmethionine:tRNA ribosyltransferase-isomerase from Clostridium perfringens (strain ATCC 13124 / DSM 756 / JCM 1290 / NCIMB 6125 / NCTC 8237 / Type A).